The chain runs to 70 residues: Basic phospholipase A2 2 (70 aa).

A disulfide bond links C28 and C44. H47 is an active-site residue. D48 is a binding site for Ca(2+).

This sequence belongs to the phospholipase A2 family. Group II subfamily. D49 sub-subfamily. Ca(2+) serves as cofactor. Expressed by the venom gland.

It localises to the secreted. It carries out the reaction a 1,2-diacyl-sn-glycero-3-phosphocholine + H2O = a 1-acyl-sn-glycero-3-phosphocholine + a fatty acid + H(+). Its function is as follows. Snake venom phospholipase A2 (PLA2) that exhibits strong myotoxicity. PLA2 catalyzes the calcium-dependent hydrolysis of the 2-acyl groups in 3-sn-phosphoglycerides. The polypeptide is Basic phospholipase A2 2 (Trimeresurus stejnegeri (Chinese green tree viper)).